We begin with the raw amino-acid sequence, 385 residues long: Tyrosine--tRNA ligase 1, cytoplasmic (385 aa).

The 'HIGH' region motif lies at 77–85; sequence PSGRMHIAQ. Residues Tyr-200, Gln-204, Asp-207, and Gln-222 each coordinate L-tyrosine. Positions 259–263 match the 'KMSKS' region motif; it reads KMSKS. Residue Lys-262 participates in ATP binding.

The protein belongs to the class-I aminoacyl-tRNA synthetase family.

Its subcellular location is the cytoplasm. The protein localises to the cytosol. It catalyses the reaction tRNA(Tyr) + L-tyrosine + ATP = L-tyrosyl-tRNA(Tyr) + AMP + diphosphate + H(+). Catalyzes the attachment of tyrosine to tRNA(Tyr) in a two-step reaction: tyrosine is first activated by ATP to form Tyr-AMP and then transferred to the acceptor end of tRNA(Tyr). The chain is Tyrosine--tRNA ligase 1, cytoplasmic from Arabidopsis thaliana (Mouse-ear cress).